The following is a 66-amino-acid chain: Conotoxin Bu1.4 (66 aa).

Positions 1–23 (MGMRMRMMFTVFLLVVLANTVVS) are cleaved as a signal peptide. A propeptide spanning residues 24–46 (FPSDRDSDGADAEASDEPVEFER) is cleaved from the precursor. Positions 25–48 (PSDRDSDGADAEASDEPVEFERDE) are disordered. Positions 32-42 (GADAEASDEPV) are enriched in acidic residues. Cystine bridges form between cysteine 51-cysteine 57 and cysteine 52-cysteine 62. Position 63 is a threonine amide (threonine 63).

Belongs to the conotoxin A superfamily. In terms of tissue distribution, expressed by the venom duct.

The protein resides in the secreted. The chain is Conotoxin Bu1.4 from Conus bullatus (Bubble cone).